Here is a 503-residue protein sequence, read N- to C-terminus: Probable mitochondrial-processing peptidase subunit alpha-1, mitochondrial (503 aa).

A mitochondrion-targeting transit peptide spans 1–59 (MYRTAASRARALKGVLTRSLRPARYASSSAVAETSSSTPAYLSWLSGGSRAALTSLDMP).

This sequence belongs to the peptidase M16 family. As to quaternary structure, heterodimer of alpha and beta subunits, forming the mitochondrial processing protease (MPP) in which subunit alpha is involved in substrate recognition and binding and subunit beta is the catalytic subunit. Component of the ubiquinol-cytochrome c oxidoreductase (cytochrome b-c1 complex, complex III, CIII), a multisubunit enzyme composed of 10 subunits. The complex is composed of 3 respiratory subunits cytochrome b (MT-CYB), cytochrome c1 (CYC1-1 or CYC1-2) and Rieske protein (UCR1-1 or UCR1-2), 2 core protein subunits MPPalpha1 (or MPPalpha2) and MPPB, and 5 low-molecular weight protein subunits QCR7-1 (or QCR7-2), UCRQ-1 (or UCRQ-2), QCR9, UCRY and probably QCR6-1 (or QCR6-2). The complex exists as an obligatory dimer and forms supercomplexes (SCs) in the inner mitochondrial membrane with NADH-ubiquinone oxidoreductase (complex I, CI), resulting in different assemblies (supercomplexes SCI(1)III(2) and SCI(2)III(4)).

The protein localises to the mitochondrion matrix. Its subcellular location is the mitochondrion inner membrane. Substrate recognition and binding subunit of the essential mitochondrial processing protease (MPP), which cleaves the mitochondrial sequence off newly imported precursors proteins. Functionally, component of the ubiquinol-cytochrome c oxidoreductase, a multisubunit transmembrane complex that is part of the mitochondrial electron transport chain which drives oxidative phosphorylation. The respiratory chain contains 3 multisubunit complexes succinate dehydrogenase (complex II, CII), ubiquinol-cytochrome c oxidoreductase (cytochrome b-c1 complex, complex III, CIII) and cytochrome c oxidase (complex IV, CIV), that cooperate to transfer electrons derived from NADH and succinate to molecular oxygen, creating an electrochemical gradient over the inner membrane that drives transmembrane transport and the ATP synthase. The cytochrome b-c1 complex catalyzes electron transfer from ubiquinol to cytochrome c, linking this redox reaction to translocation of protons across the mitochondrial inner membrane, with protons being carried across the membrane as hydrogens on the quinol. In the process called Q cycle, 2 protons are consumed from the matrix, 4 protons are released into the intermembrane space and 2 electrons are passed to cytochrome c. This chain is Probable mitochondrial-processing peptidase subunit alpha-1, mitochondrial (MPPalpha1), found in Arabidopsis thaliana (Mouse-ear cress).